A 549-amino-acid polypeptide reads, in one-letter code: Undecaprenyl phosphate-alpha-4-amino-4-deoxy-L-arabinose arabinosyl transferase 1 (549 aa).

A run of 12 helical transmembrane segments spans residues 9 to 29 (LLLI…GLWI), 80 to 102 (LFGV…YLLA), 112 to 132 (SLAS…AGYA), 133 to 153 (NLDP…WFTF), 176 to 196 (FMTK…PYAI), 204 to 224 (LLIY…PWAL), 257 to 277 (WWYY…LLPA), 290 to 310 (SSGF…LSKG), 312 to 332 (LPAY…NTLV), 342 to 362 (LLAF…LALV), 377 to 397 (HLVL…LQAM), and 402 to 422 (LWAA…AALP).

This sequence belongs to the glycosyltransferase 83 family.

The protein resides in the cell inner membrane. The catalysed reaction is 4-amino-4-deoxy-alpha-L-arabinopyranosyl di-trans,octa-cis-undecaprenyl phosphate + lipid IVA = lipid IIA + di-trans,octa-cis-undecaprenyl phosphate.. Its pathway is lipopolysaccharide metabolism; 4-amino-4-deoxy-beta-L-arabinose-lipid A biosynthesis. Its function is as follows. Catalyzes the transfer of the L-Ara4N moiety of the glycolipid undecaprenyl phosphate-alpha-L-Ara4N to lipid A. The modified arabinose is attached to lipid A and is required for resistance to polymyxin and cationic antimicrobial peptides. The chain is Undecaprenyl phosphate-alpha-4-amino-4-deoxy-L-arabinose arabinosyl transferase 1 from Pseudomonas fluorescens (strain ATCC BAA-477 / NRRL B-23932 / Pf-5).